Consider the following 342-residue polypeptide: S-adenosylmethionine:tRNA ribosyltransferase-isomerase (342 aa).

Belongs to the QueA family. In terms of assembly, monomer.

It is found in the cytoplasm. The catalysed reaction is 7-aminomethyl-7-carbaguanosine(34) in tRNA + S-adenosyl-L-methionine = epoxyqueuosine(34) in tRNA + adenine + L-methionine + 2 H(+). The protein operates within tRNA modification; tRNA-queuosine biosynthesis. Its function is as follows. Transfers and isomerizes the ribose moiety from AdoMet to the 7-aminomethyl group of 7-deazaguanine (preQ1-tRNA) to give epoxyqueuosine (oQ-tRNA). In Bacillus pumilus (strain SAFR-032), this protein is S-adenosylmethionine:tRNA ribosyltransferase-isomerase.